The primary structure comprises 445 residues: Probable D-serine dehydratase (445 aa).

Lys111 carries the post-translational modification N6-(pyridoxal phosphate)lysine.

This sequence belongs to the serine/threonine dehydratase family. DsdA subfamily. Pyridoxal 5'-phosphate serves as cofactor.

It catalyses the reaction D-serine = pyruvate + NH4(+). The sequence is that of Probable D-serine dehydratase from Burkholderia pseudomallei (strain 668).